Reading from the N-terminus, the 933-residue chain is MAASRLDFGEVETFLDRHPELFEDYLMRKGKQEMVEKWLQRHSQGQGALGPRPSLAGTSSLAHSTCRGGSSVGGGTGPNGSAHSQPLPGGGDCGGVPLSPSWAGGSRGDGNLQRRASQKELRKSFARSKAIHVNRTYDEQVTSRAQEPLSSVRRRALLRKASSLPPTTAHILSALLESRVNLPRYPPTAIDYKCHLKKHNERQFFLELVKDISNDLDLTSLSYKILIFVCLMVDADRCSLFLVEGAAAGKKTLVSKFFDVHAGTPLLPCSSTENSNEVQVPWGKGIIGYVGEHGETVNIPDAYQDRRFNDEIDKLTGYKTKSLLCMPIRSSDGEIIGVAQAINKIPEGAPFTEDDEKVMQMYLPFCGIAISNAQLFAASRKEYERSRALLEVVNDLFEEQTDLEKIVKKIMHRAQTLLKCERCSVLLLEDIESPVVKFTKSFELMSPKCSADAENSFKESMEKSSYSDWLINNSIAELVASTGLPVNISDAYQDPRFDAEADQISGFHIRSVLCVPIWNSNHQIIGVAQVLNRLDGKPFDDADQRLFEAFVIFCGLGINNTIMYDQVKKSWAKQSVALDVLSYHATCSKAEVDKFKAANIPLVSELAIDDIHFDDFSLDVDAMITAALRMFMELGMVQKFKIDYETLCRWLLTVRKNYRMVLYHNWRHAFNVCQLMFAMLTTAGFQDILTEVEILAVIVGCLCHDLDHRGTNNAFQAKSGSALAQLYGTSATLEHHHFNHAVMILQSEGHNIFANLSSKEYSDLMQLLKQSILATDLTLYFERRTEFFELVSKGEYDWNIKNHRDIFRSMLMTACDLGAVTKPWEISRQVAELVTSEFFEQGDRERLELKLTPSAIFDRNRKDELPRLQLEWIDSICMPLYQALVKVNVKLKPMLDSVATNRSKWEELHQKRLLASTASSSPASVMVAKEDRN.

A disordered region spans residues 42–125; sequence HSQGQGALGP…ASQKELRKSF (84 aa). 3 positions are modified to phosphoserine: Ser162, Ser163, and Ser239. 2 consecutive GAF domains span residues 217-370 and 402-558; these read DLTS…GIAI and DLEK…GLGI. Residue Ser424 coordinates 3',5'-cyclic GMP. One can recognise a PDEase domain in the interval 588-912; sequence SKAEVDKFKA…SKWEELHQKR (325 aa). His664 functions as the Proton donor in the catalytic mechanism. A divalent metal cation-binding residues include His668, His704, Asp705, and Asp816.

Belongs to the cyclic nucleotide phosphodiesterase family. It depends on a divalent metal cation as a cofactor. As to expression, isoform 1 is present in prostate, pituitary, heart and liver. It is however not present in testis nor in penis, suggesting that weak inhibition by Tadalafil (Cialis) is not relevant (at protein level). Isoform 2 may be expressed in testis. Isoform 4 is expressed in adrenal cortex.

It localises to the cytoplasm. The protein resides in the cytosol. It carries out the reaction 3',5'-cyclic GMP + H2O = GMP + H(+). The enzyme catalyses 3',5'-cyclic AMP + H2O = AMP + H(+). Inhibited by 3-isobutyl-1-methylxanthine (IBMX), zaprinast and dipyridamole. cGMP acts as an allosteric activator. Weakly inhibited by Sildenafil (Viagra) and Tadalafil (Cialis); however, the fact that the protein is probably absent from testis, suggests that it is not biologically relevant and is not related with erectile dysfunction. In terms of biological role, plays a role in signal transduction by regulating the intracellular concentration of cyclic nucleotides cAMP and cGMP. Catalyzes the hydrolysis of both cAMP and cGMP to 5'-AMP and 5'-GMP, respectively. The chain is Dual 3',5'-cyclic-AMP and -GMP phosphodiesterase 11A from Homo sapiens (Human).